Reading from the N-terminus, the 242-residue chain is DNA repair protein RecO (242 aa).

It belongs to the RecO family. Monomer.

Its function is as follows. Involved in DNA repair and RecF pathway recombination. The sequence is that of DNA repair protein RecO from Shigella dysenteriae serotype 1 (strain Sd197).